A 139-amino-acid polypeptide reads, in one-letter code: Acidic phospholipase A2 DE-I (139 aa).

The signal sequence occupies residues 1-16; the sequence is MRTLWIMAVLLLGVEG. Intrachain disulfides connect C42–C132, C44–C60, C59–C111, C65–C139, C66–C104, C73–C97, and C91–C102. Residues Y43, G45, and G47 each contribute to the Ca(2+) site. Residue H63 is part of the active site. Position 64 (D64) interacts with Ca(2+). D105 is an active-site residue.

The cofactor is Ca(2+). In terms of tissue distribution, expressed by the venom gland.

It localises to the secreted. The enzyme catalyses a 1,2-diacyl-sn-glycero-3-phosphocholine + H2O = a 1-acyl-sn-glycero-3-phosphocholine + a fatty acid + H(+). Its function is as follows. Snake venom phospholipase A2 (PLA2) that inhibits the ADP- and collagen-induced human platelet aggregation. Exhibits high hydrolytic activities and preferred the anionic micelles to the zwitterionic micelles. PLA2 catalyzes the calcium-dependent hydrolysis of the 2-acyl groups in 3-sn-phosphoglycerides. This Ovophis okinavensis (Ryukyu Island pit viper) protein is Acidic phospholipase A2 DE-I.